Here is a 316-residue protein sequence, read N- to C-terminus: Small ribosomal subunit protein RACK1 (316 aa).

WD repeat units follow at residues 13 to 44 (GHNGWVTSLATSLENPNMLLSGSRDKSLIIWN), 61 to 91 (GHSHIVSDCVISSDGAYALSASWDKTLRLWE), 103 to 133 (GHTNDVLSVSFSADNRQIVSGSRDRTIKLWN), 146 to 178 (GHTEWVSCVRFSPNPQNPVIVSSGWDKLVKVWE), 190 to 220 (GHTGYINAVTISPDGSLCASGGKDGTTMLWD), 231 to 260 (NANDEIHALVFSPNRYWLCAATSSSIIIFD), and 281 to 311 (SREPECVSLAWSADGQTLFAGYTDNIIRAWG).

Belongs to the WD repeat G protein beta family. Ribosomal protein RACK1 subfamily. Component of the small ribosomal subunit (SSU). Mature N.crassa ribosomes consist of a small (40S) and a large (60S) subunit. The 40S small subunit contains 1 molecule of ribosomal RNA (18S rRNA) and at least 32 different proteins. The large 60S subunit contains 3 rRNA molecules (26S, 5.8S and 5S rRNA) and at least 42 different proteins.

The protein localises to the cytoplasm. In terms of biological role, component of the ribosome, a large ribonucleoprotein complex responsible for the synthesis of proteins in the cell. The small ribosomal subunit (SSU) binds messenger RNAs (mRNAs) and translates the encoded message by selecting cognate aminoacyl-transfer RNA (tRNA) molecules. The large subunit (LSU) contains the ribosomal catalytic site termed the peptidyl transferase center (PTC), which catalyzes the formation of peptide bonds, thereby polymerizing the amino acids delivered by tRNAs into a polypeptide chain. The nascent polypeptides leave the ribosome through a tunnel in the LSU and interact with protein factors that function in enzymatic processing, targeting, and the membrane insertion of nascent chains at the exit of the ribosomal tunnel. Required to activate general amino acid control under conditions of amino acid limitation in the vegetative growth phase, and for formation of protoperithecia in preparation for the sexual phase of the life cycle of N.crassa. This chain is Small ribosomal subunit protein RACK1 (cpc-2), found in Neurospora crassa (strain ATCC 24698 / 74-OR23-1A / CBS 708.71 / DSM 1257 / FGSC 987).